The sequence spans 37 residues: uncharacterized protein (37 aa).

This is an uncharacterized protein from Saccharomyces cerevisiae (strain ATCC 204508 / S288c) (Baker's yeast).